The following is a 95-amino-acid chain: MADDKPKEGVKTENNDHINLKVAGQDGSVVQFKIKRQTPLSKLMKAYCERQGLSMRQIRFRFDGQPINETDTPAQLEMEDEDTIDVFQQQTGGSF.

K11 participates in a covalent cross-link: Glycyl lysine isopeptide (Lys-Gly) (interchain with G-Cter in SUMO). The Ubiquitin-like domain occupies 16-95 (DHINLKVAGQ…VFQQQTGGSF (80 aa)). Residue G93 forms a Glycyl lysine isopeptide (Gly-Lys) (interchain with K-? in acceptor proteins) linkage. Residues 94-95 (SF) constitute a propeptide that is removed on maturation.

Belongs to the ubiquitin family. SUMO subfamily. In terms of assembly, interacts with sae2 and ube2i. Covalently attached to a number of proteins, including top2. Polymeric chains can be formed through Lys-11 cross-linking. Post-translationally, cleavage of precursor form by a sentrin-specific protease is necessary for function.

It localises to the nucleus. In terms of biological role, ubiquitin-like protein that can be covalently attached to proteins as a monomer or as a lysine-linked polymer. Covalent attachment via an isopeptide bond to its substrates requires prior activation by the E1 complex sae1-sae2 and linkage to the E2 enzyme ube2i, and can be promoted by an E3 ligase such as pias1-4. This post-translational modification on lysine residues of proteins plays a crucial role in a number of cellular processes such as nuclear transport, DNA replication and repair, mitosis and signal transduction. Polymeric sumo2 chains are also susceptible to polyubiquitination which functions as a signal for proteasomal degradation of modified proteins. In Xenopus laevis (African clawed frog), this protein is Small ubiquitin-related modifier 2-A (sumo2-a).